A 148-amino-acid chain; its full sequence is Ubiquitin-conjugating enzyme E2 28 (148 aa).

A UBC core domain is found at 1-147 (MASKRILKEL…ARSWTQKYAM (147 aa)). Catalysis depends on Cys-85, which acts as the Glycyl thioester intermediate.

It belongs to the ubiquitin-conjugating enzyme family. Interacts with SINAT5. Expressed in seeds, pistils, siliques, hypocotyls and leaves.

It carries out the reaction S-ubiquitinyl-[E1 ubiquitin-activating enzyme]-L-cysteine + [E2 ubiquitin-conjugating enzyme]-L-cysteine = [E1 ubiquitin-activating enzyme]-L-cysteine + S-ubiquitinyl-[E2 ubiquitin-conjugating enzyme]-L-cysteine.. Its pathway is protein modification; protein ubiquitination. Its function is as follows. Accepts the ubiquitin from the E1 complex and catalyzes its covalent attachment to other proteins. In Arabidopsis thaliana (Mouse-ear cress), this protein is Ubiquitin-conjugating enzyme E2 28.